The following is a 682-amino-acid chain: Potassium-transporting ATPase ATP-binding subunit (682 aa).

Helical transmembrane passes span 34-54 (PVMF…IAMA), 62-82 (ALFS…ANFA), 219-239 (IALT…TATL), and 254-274 (VLVA…LSAI). Asp-307 serves as the catalytic 4-aspartylphosphate intermediate. Residues Asp-344, Glu-348, 377-384 (FTAQSRMS), and Lys-395 each bind ATP. Positions 518 and 522 each coordinate Mg(2+). 3 helical membrane-spanning segments follow: residues 588-608 (FAII…LNIM), 616-636 (AILS…PLAL), and 656-676 (IYGL…DLLL).

The protein belongs to the cation transport ATPase (P-type) (TC 3.A.3) family. Type IA subfamily. As to quaternary structure, the system is composed of three essential subunits: KdpA, KdpB and KdpC.

The protein resides in the cell inner membrane. It catalyses the reaction K(+)(out) + ATP + H2O = K(+)(in) + ADP + phosphate + H(+). Its function is as follows. Part of the high-affinity ATP-driven potassium transport (or Kdp) system, which catalyzes the hydrolysis of ATP coupled with the electrogenic transport of potassium into the cytoplasm. This subunit is responsible for energy coupling to the transport system and for the release of the potassium ions to the cytoplasm. This is Potassium-transporting ATPase ATP-binding subunit from Escherichia coli O6:K15:H31 (strain 536 / UPEC).